We begin with the raw amino-acid sequence, 192 residues long: UPF0301 protein Bcen_0382 (192 aa).

The protein belongs to the UPF0301 (AlgH) family.

The polypeptide is UPF0301 protein Bcen_0382 (Burkholderia orbicola (strain AU 1054)).